A 248-amino-acid polypeptide reads, in one-letter code: UDP-N-acetyl-D-mannosaminuronic acid transferase (248 aa).

It belongs to the glycosyltransferase 26 family.

The catalysed reaction is UDP-N-acetyl-alpha-D-mannosaminouronate + N-acetyl-alpha-D-glucosaminyl-di-trans,octa-cis-undecaprenyl diphosphate = beta-D-ManNAcA-(1-&gt;4)-alpha-D-GlcNAc-di-trans,octa-cis-undecaprenyl diphosphate + UDP + H(+). Its pathway is bacterial outer membrane biogenesis; enterobacterial common antigen biosynthesis. In terms of biological role, catalyzes the synthesis of Und-PP-GlcNAc-ManNAcA (Lipid II), the second lipid-linked intermediate involved in enterobacterial common antigen (ECA) synthesis. The sequence is that of UDP-N-acetyl-D-mannosaminuronic acid transferase from Klebsiella pneumoniae subsp. pneumoniae (strain ATCC 700721 / MGH 78578).